A 187-amino-acid polypeptide reads, in one-letter code: GTP cyclohydrolase 1 (187 aa).

Residues Cys-76, His-79, and Cys-148 each contribute to the Zn(2+) site.

It belongs to the GTP cyclohydrolase I family. In terms of assembly, toroid-shaped homodecamer, composed of two pentamers of five dimers.

It carries out the reaction GTP + H2O = 7,8-dihydroneopterin 3'-triphosphate + formate + H(+). It participates in cofactor biosynthesis; 7,8-dihydroneopterin triphosphate biosynthesis; 7,8-dihydroneopterin triphosphate from GTP: step 1/1. In Streptococcus agalactiae serotype Ia (strain ATCC 27591 / A909 / CDC SS700), this protein is GTP cyclohydrolase 1.